We begin with the raw amino-acid sequence, 216 residues long: Glycerol-3-phosphate acyltransferase (216 aa).

A run of 5 helical transmembrane segments spans residues Ile-4 to Val-24, Val-56 to Leu-76, Pro-80 to Phe-100, Phe-112 to Leu-132, and Gly-138 to Phe-158.

This sequence belongs to the PlsY family. In terms of assembly, probably interacts with PlsX.

Its subcellular location is the cell inner membrane. It carries out the reaction an acyl phosphate + sn-glycerol 3-phosphate = a 1-acyl-sn-glycero-3-phosphate + phosphate. Its pathway is lipid metabolism; phospholipid metabolism. Its function is as follows. Catalyzes the transfer of an acyl group from acyl-phosphate (acyl-PO(4)) to glycerol-3-phosphate (G3P) to form lysophosphatidic acid (LPA). This enzyme utilizes acyl-phosphate as fatty acyl donor, but not acyl-CoA or acyl-ACP. The sequence is that of Glycerol-3-phosphate acyltransferase from Yersinia pseudotuberculosis serotype O:1b (strain IP 31758).